We begin with the raw amino-acid sequence, 96 residues long: Acylphosphatase (96 aa).

An Acylphosphatase-like domain is found at Arg4 to Arg96. Catalysis depends on residues Arg19 and Asn42.

It belongs to the acylphosphatase family.

The enzyme catalyses an acyl phosphate + H2O = a carboxylate + phosphate + H(+). The protein is Acylphosphatase (acyP) of Helicobacter hepaticus (strain ATCC 51449 / 3B1).